The primary structure comprises 301 residues: Tegument protein VP22 (301 aa).

The tract at residues 1–171 (MTSRRSVKSG…PTRSKTPAQG (171 aa)) is disordered. The span at 113–124 (RTPTTAPRAPRT) shows a compositional bias: low complexity. The short motif at 163-166 (TRSK) is the Nuclear localization signal element. The segment at 174 to 267 (RKLHFSTAPP…LVNPDVVQDV (94 aa)) is interaction with gE. The short motif at 232-244 (LNELLGITTIRVT) is the Nuclear export signal element. Over residues 269 to 281 (AATATRGRSAASR) the composition is skewed to low complexity. Positions 269–301 (AATATRGRSAASRPTERPRAPARSASRPRRPVE) are disordered.

It belongs to the alphaherpesvirinae VP22 tegument protein family. In terms of assembly, interacts with gE (via C-terminus); this interaction is necessary for the recruitment of VP22 to the Golgi and its packaging into virions. Interacts with gM (via C-terminus). Interacts with VP16; this interaction allows the formation of a tripartite complex composed of VP16, VP22 and UL41/VHS. According to a report interacts with gD (via C-terminus). According another publication, does not interact with gD. Interacts with host CGAS. Interacts with host SET; this interaction may interfere with SET-mediated nucleosomal deposition onto the viral genome. Interacts with the capsid-binding protein UL16. Highly phosphorylated in the host cell. Packaging is selective for underphosphorylated forms.

Its subcellular location is the virion tegument. The protein resides in the host cytoplasm. The protein localises to the host nucleus. It is found in the host Golgi apparatus. Functionally, tegument protein that plays different roles during the time course of infection. Participates in both the accumulation of viral mRNAs and viral protein translation at late time of infection. Modulates the RNase activity of the virion host shutoff protein UL41 probably to ensure necessary levels of key cellular mRNAs and proteins. Plays a role in microtubule reorganization that occurs after viral infection by stabilizing microtubule network. Finally, may prevent nucleosomal deposition onto the viral genome by interacting with and inhibiting host SET. Plays a role in the inhibition of host innate immune system by targeting the CGAS enzymatic activity which is the principal cytosolic DNA sensor that detects invading viral DNA. Acts by mediating disruption of liquid-like droplets in which CGAS is activated, thereby preventing CGAS activity. The protein is Tegument protein VP22 of Human herpesvirus 1 (strain 17) (HHV-1).